Consider the following 367-residue polypeptide: MQRDQVIVVKLGTSVLTGGTDKLDKAHMVELVRQCCELKKQGHHVILVSSGAVAAGREQLLKPCGRSVIDKQMLAAVGQGQLIHIWQSLFALYGVNVGQMLLTRADVNDRERYLNARDTLNALLNYDVVPIINENDAVATSEIKVGDNDNLSALVAILANANKLLLLTDQEGLFTSDPRTNADATLIGEVSDINDELRQLAGGSGTNLGTGGMATKLQAADIARRAGVEVIIAKGAGKNVILKCMSEQLPGTRFLKLTAPKEGRKKWLLAGPKSSGQIVIDAGAITALQTKGASLLAKGVTNALGAFERGDLISVINSDKQLIARGLTRFSSSEVNKIKGAHSKQIGELLDYDGGAEVLHRDDLILL.

Residue Lys-10 participates in ATP binding. Residues Ser-50, Asp-136, and Asn-148 each coordinate substrate. Residues 168–169 and 210–216 each bind ATP; these read TD and TGGMATK. The PUA domain occupies 275–353; the sequence is SGQIVIDAGA…KQIGELLDYD (79 aa).

The protein belongs to the glutamate 5-kinase family.

It is found in the cytoplasm. It carries out the reaction L-glutamate + ATP = L-glutamyl 5-phosphate + ADP. It participates in amino-acid biosynthesis; L-proline biosynthesis; L-glutamate 5-semialdehyde from L-glutamate: step 1/2. Catalyzes the transfer of a phosphate group to glutamate to form L-glutamate 5-phosphate. The sequence is that of Glutamate 5-kinase 2 from Pseudoalteromonas translucida (strain TAC 125).